A 1028-amino-acid polypeptide reads, in one-letter code: Multidrug resistance protein MdtC (1028 aa).

A run of 12 helical transmembrane segments spans residues 3-23 (FFAL…AITL), 333-353 (EVEQ…FLFL), 360-380 (LIPA…MYLC), 387-407 (LSLM…IVVL), 431-451 (VGFT…PLLL), 463-483 (FAVT…TLTP), 528-548 (LVGV…ISIP), 853-873 (VILI…LYES), 875-895 (VHPL…LLAL), 897-917 (LFNA…IGIV), 953-973 (PIMM…ISGG), and 984-1004 (ITIV…TPVV).

Belongs to the resistance-nodulation-cell division (RND) (TC 2.A.6) family. MdtC subfamily. Part of a tripartite efflux system composed of MdtA, MdtB and MdtC. MdtC forms a heteromultimer with MdtB.

The protein resides in the cell inner membrane. The chain is Multidrug resistance protein MdtC from Citrobacter koseri (strain ATCC BAA-895 / CDC 4225-83 / SGSC4696).